Consider the following 123-residue polypeptide: CD59 glycoprotein (123 aa).

The signal sequence occupies residues 1–25 (MGSKGGFILLWLLSILAVLCHLGHS). A UPAR/Ly6 domain is found at 26–103 (LQCYNCINPA…LCNKSDATIS (78 aa)). 5 disulfide bridges follow: Cys-28/Cys-51, Cys-31/Cys-38, Cys-44/Cys-65, Cys-71/Cys-89, and Cys-90/Cys-95. The N-linked (GlcNAc...) asparagine glycan is linked to Asn-43. The GPI-anchor amidated serine moiety is linked to residue Ser-98. Residues 99–123 (DATISSGKTALLVILLLVATWHFCL) constitute a propeptide, removed in mature form.

Interacts with T-cell surface antigen CD2. In terms of processing, N- and O-glycosylated. As to expression, expressed in all tissues tested (lung, testis liver, kidney, spleen, heart and skeletal muscle). Highest levels in lung and spleen, lowest levels in liver and skeletal muscle.

It localises to the cell membrane. Its subcellular location is the secreted. Functionally, potent inhibitor of the complement membrane attack complex (MAC) action, which protects self-cells from damage during complement activation. Acts by binding to the beta-haipins of C8 (C8A and C8B) components of the assembling MAC, forming an intermolecular beta-sheet that prevents incorporation of the multiple copies of C9 required for complete formation of the osmolytic pore. This is CD59 glycoprotein from Sus scrofa (Pig).